Reading from the N-terminus, the 721-residue chain is Polyribonucleotide nucleotidyltransferase (721 aa).

Positions 495 and 501 each coordinate Mg(2+). The 60-residue stretch at proline 562–isoleucine 621 folds into the KH domain. The 69-residue stretch at glycine 631–arginine 699 folds into the S1 motif domain.

This sequence belongs to the polyribonucleotide nucleotidyltransferase family. It depends on Mg(2+) as a cofactor.

The protein resides in the cytoplasm. The enzyme catalyses RNA(n+1) + phosphate = RNA(n) + a ribonucleoside 5'-diphosphate. Functionally, involved in mRNA degradation. Catalyzes the phosphorolysis of single-stranded polyribonucleotides processively in the 3'- to 5'-direction. The chain is Polyribonucleotide nucleotidyltransferase from Synechococcus sp. (strain CC9605).